A 140-amino-acid chain; its full sequence is Nucleoside diphosphate kinase (140 aa).

ATP is bound by residues K11, F59, R87, T93, R104, and N114. The Pros-phosphohistidine intermediate role is filled by H117.

This sequence belongs to the NDK family. Homotetramer. Mg(2+) is required as a cofactor.

It is found in the cytoplasm. The enzyme catalyses a 2'-deoxyribonucleoside 5'-diphosphate + ATP = a 2'-deoxyribonucleoside 5'-triphosphate + ADP. The catalysed reaction is a ribonucleoside 5'-diphosphate + ATP = a ribonucleoside 5'-triphosphate + ADP. Functionally, major role in the synthesis of nucleoside triphosphates other than ATP. The ATP gamma phosphate is transferred to the NDP beta phosphate via a ping-pong mechanism, using a phosphorylated active-site intermediate. This Chelativorans sp. (strain BNC1) protein is Nucleoside diphosphate kinase.